The chain runs to 440 residues: Trigger factor (440 aa).

The PPIase FKBP-type domain maps to N163 to P248.

Belongs to the FKBP-type PPIase family. Tig subfamily.

It is found in the cytoplasm. It carries out the reaction [protein]-peptidylproline (omega=180) = [protein]-peptidylproline (omega=0). Functionally, involved in protein export. Acts as a chaperone by maintaining the newly synthesized protein in an open conformation. Functions as a peptidyl-prolyl cis-trans isomerase. The protein is Trigger factor of Finegoldia magna (strain ATCC 29328 / DSM 20472 / WAL 2508) (Peptostreptococcus magnus).